The primary structure comprises 242 residues: Caspase-14 (242 aa).

The propeptide occupies 1-5; the sequence is MSNPR. Residues His-89 and Cys-132 contribute to the active site. Positions 147-152 are excised as a propeptide; sequence EIVMVI.

The protein belongs to the peptidase C14A family. As to quaternary structure, heterodimer of a large and a small subunit, both processed from the precursor; the mature active form is a p17/p10 dimer and the intermediate form a p20/p8 dimer. In terms of processing, maturation by proteolytic processing appears to be a two-step process. The precursor is processed by KLK7 to yield the p20/p8 intermediate form which acts on the precursor to yield the p17/p10 mature form. Initially, cleavage between Ile-152 and Lys-153 has been proposed to yield the large and small subunits of the active enzyme. As to expression, expressed in keratinocytes of adult skin suprabasal layers (from spinous layers to the stratum granulosum and stratum corneum) (at protein level). Expressed in keratinocytes of hair shaft and sebaceous glands (at protein level). In psoriatic skin only expressed at very low levels. The p17/10 mature form is expressed in epidermis stratum corneum, the p20/p8 intermediate form in epidermis upper granular cells of the stratum granulosum.

Its subcellular location is the cytoplasm. It localises to the nucleus. Its activity is regulated as follows. Inhibited by caspase-1 inhibitor YVAD-FMK and the pan-caspase inhibitor VAD-FMK. Non-apoptotic caspase involved in epidermal differentiation. Is the predominant caspase in epidermal stratum corneum. Seems to play a role in keratinocyte differentiation and is required for cornification. Regulates maturation of the epidermis by proteolytically processing filaggrin. In vitro has a preference for the substrate [WY]-X-X-D motif and is active on the synthetic caspase substrate WEHD-ACF. Involved in processing of prosaposin in the epidermis. May be involved in retinal pigment epithelium cell barrier function. Involved in DNA degradation in differentiated keratinocytes probably by cleaving DFFA/ICAD leading to liberation of DFFB/CAD. This Homo sapiens (Human) protein is Caspase-14 (CASP14).